We begin with the raw amino-acid sequence, 416 residues long: UDP-N-acetylglucosamine 1-carboxyvinyltransferase (416 aa).

Residue 22–23 (KN) coordinates phosphoenolpyruvate. Arginine 92 serves as a coordination point for UDP-N-acetyl-alpha-D-glucosamine. The Proton donor role is filled by cysteine 116. At cysteine 116 the chain carries 2-(S-cysteinyl)pyruvic acid O-phosphothioketal. 2 residues coordinate UDP-N-acetyl-alpha-D-glucosamine: aspartate 304 and isoleucine 326.

Belongs to the EPSP synthase family. MurA subfamily.

It is found in the cytoplasm. It catalyses the reaction phosphoenolpyruvate + UDP-N-acetyl-alpha-D-glucosamine = UDP-N-acetyl-3-O-(1-carboxyvinyl)-alpha-D-glucosamine + phosphate. Its pathway is cell wall biogenesis; peptidoglycan biosynthesis. Cell wall formation. Adds enolpyruvyl to UDP-N-acetylglucosamine. The polypeptide is UDP-N-acetylglucosamine 1-carboxyvinyltransferase (Solidesulfovibrio magneticus (strain ATCC 700980 / DSM 13731 / RS-1) (Desulfovibrio magneticus)).